A 170-amino-acid polypeptide reads, in one-letter code: NADH-quinone oxidoreductase subunit B (170 aa).

[4Fe-4S] cluster is bound by residues C37, C38, C102, and C131.

The protein belongs to the complex I 20 kDa subunit family. In terms of assembly, NDH-1 is composed of 14 different subunits. Subunits NuoB, C, D, E, F, and G constitute the peripheral sector of the complex. Requires [4Fe-4S] cluster as cofactor.

It is found in the cell inner membrane. The enzyme catalyses a quinone + NADH + 5 H(+)(in) = a quinol + NAD(+) + 4 H(+)(out). Its function is as follows. NDH-1 shuttles electrons from NADH, via FMN and iron-sulfur (Fe-S) centers, to quinones in the respiratory chain. The immediate electron acceptor for the enzyme in this species is believed to be ubiquinone. Couples the redox reaction to proton translocation (for every two electrons transferred, four hydrogen ions are translocated across the cytoplasmic membrane), and thus conserves the redox energy in a proton gradient. The protein is NADH-quinone oxidoreductase subunit B of Geotalea daltonii (strain DSM 22248 / JCM 15807 / FRC-32) (Geobacter daltonii).